We begin with the raw amino-acid sequence, 414 residues long: MAMVVSTWRDPQDEVPGSQGSQASQAPPVPGPPPGAPHTPQTPGQGGPASTPAQTAAGGQGGPGGPGSDKQQQQQHIECVVCGDKSSGKHYGQFTCEGCKSFFKRSVRRNLSYTCRANRNCPIDQHHRNQCQYCRLKKCLKVGMRREAVQRGRMPPTQPTHGQFALTNGDPLNCHSYLSGYISLLLRAEPYPTSRFGSQCMQPNNIMGIENICELAARMLFSAVEWARNIPFFPDLQITDQVALLRLTWSELFVLNAAQCSMPLHVAPLLAAAGLHASPMSADRVVAFMDHIRIFQEQVEKLKALHVDSAEYSCLKAIVLFTSDACGLSDVAHVESLQEKSQCALEEYVRSQYPNQPTRFGKLLLRLPSLRTVSSSVIEQLFFVRLVGKTPIETLIRDMLLSGSSFNWPYMAIQ.

The tract at residues 1 to 72 (MAMVVSTWRD…PGGPGSDKQQ (72 aa)) is disordered. The span at 27–37 (PPVPGPPPGAP) shows a compositional bias: pro residues. Residues 38-57 (HTPQTPGQGGPASTPAQTAA) show a composition bias toward low complexity. Position 51 is a phosphothreonine (T51). A compositionally biased stretch (gly residues) spans 58–67 (GGQGGPGGPG). The nuclear receptor DNA-binding region spans 76-151 (HIECVVCGDK…VGMRREAVQR (76 aa)). NR C4-type zinc fingers lie at residues 79 to 99 (CVVCGDKSSGKHYGQFTCEGC) and 115 to 139 (CRANRNCPIDQHHRNQCQYCRLKKC). Residues 117-414 (ANRNCPIDQH…SFNWPYMAIQ (298 aa)) are interaction with ZFPM2. An NR LBD domain is found at 177 to 403 (YLSGYISLLL…TLIRDMLLSG (227 aa)). An important for dimerization region spans residues 337–414 (LQEKSQCALE…SFNWPYMAIQ (78 aa)).

The protein belongs to the nuclear hormone receptor family. NR2 subfamily. As to quaternary structure, interacts with SQSTM1. Binds DNA as a dimer; homodimer or heterodimer with NR2F6. Interacts with NCOA1, NCOA2, NCOA3 and PPARGC1A. Interacts with ZFPM2. As to expression, ubiquitous. Expressed in the stromal cells of developing fetal ovaries.

The protein resides in the nucleus. Ligand-activated transcription factor. Activated by high concentrations of 9-cis-retinoic acid and all-trans-retinoic acid, but not by dexamethasone, cortisol or progesterone (in vitro). Regulation of the apolipoprotein A-I gene transcription. Binds to DNA site A. May be required to establish ovary identity during early gonad development. This chain is COUP transcription factor 2 (NR2F2), found in Homo sapiens (Human).